The primary structure comprises 217 residues: Pyridoxine/pyridoxamine 5'-phosphate oxidase (217 aa).

Residues 66 to 71 (RMVLLK), 81 to 82 (FT), R87, K88, and Q110 contribute to the FMN site. K71 serves as a coordination point for substrate. Substrate is bound by residues Y128, R132, and S136. FMN contacts are provided by residues 145-146 (QS) and W190. 196-198 (RLH) serves as a coordination point for substrate. R200 provides a ligand contact to FMN.

The protein belongs to the pyridoxamine 5'-phosphate oxidase family. Homodimer. Requires FMN as cofactor.

It catalyses the reaction pyridoxamine 5'-phosphate + O2 + H2O = pyridoxal 5'-phosphate + H2O2 + NH4(+). It carries out the reaction pyridoxine 5'-phosphate + O2 = pyridoxal 5'-phosphate + H2O2. Its pathway is cofactor metabolism; pyridoxal 5'-phosphate salvage; pyridoxal 5'-phosphate from pyridoxamine 5'-phosphate: step 1/1. It participates in cofactor metabolism; pyridoxal 5'-phosphate salvage; pyridoxal 5'-phosphate from pyridoxine 5'-phosphate: step 1/1. Its function is as follows. Catalyzes the oxidation of either pyridoxine 5'-phosphate (PNP) or pyridoxamine 5'-phosphate (PMP) into pyridoxal 5'-phosphate (PLP). In Colwellia psychrerythraea (strain 34H / ATCC BAA-681) (Vibrio psychroerythus), this protein is Pyridoxine/pyridoxamine 5'-phosphate oxidase.